Reading from the N-terminus, the 309-residue chain is Ferredoxin--NADP reductase (309 aa).

Residues Asp-25, Gln-33, Tyr-38, Val-77, Phe-107, Asp-267, and Thr-307 each contribute to the FAD site.

Belongs to the ferredoxin--NADP reductase type 2 family. Homodimer. Requires FAD as cofactor.

It catalyses the reaction 2 reduced [2Fe-2S]-[ferredoxin] + NADP(+) + H(+) = 2 oxidized [2Fe-2S]-[ferredoxin] + NADPH. This Lactobacillus acidophilus (strain ATCC 700396 / NCK56 / N2 / NCFM) protein is Ferredoxin--NADP reductase.